The chain runs to 371 residues: 4-hydroxyphenylpyruvate dioxygenase-like protein (371 aa).

VOC domains are found at residues 7-135 (RLCH…LLQR) and 160-328 (HVDH…VFTK). Fe cation is bound by residues His163, His258, and Glu339.

Belongs to the 4HPPD family. Fe cation serves as cofactor.

The protein localises to the mitochondrion. The enzyme catalyses 3-(4-hydroxyphenyl)pyruvate + O2 = (S)-4-hydroxymandelate + CO2. Its function is as follows. Iron-dependent dioxygenase that catalyzes the conversion of 4-hydroxyphenylpyruvate (4-HPPA) to 4-hydroxymandelate (4-HMA) in the mitochondria, one of the steps in the biosynthesis of coenzyme Q10 from tyrosine. This Mus musculus (Mouse) protein is 4-hydroxyphenylpyruvate dioxygenase-like protein.